Consider the following 212-residue polypeptide: Maleylpyruvate isomerase (212 aa).

In terms of domain architecture, GST N-terminal spans 1 to 80; that stretch reads MKLYNFWRSG…WLEEQYPTPA (80 aa). Residues 9-11, histidine 38, valine 52, 64-65, 102-104, 108-110, and arginine 176 each bind glutathione; these read SGT, QS, DIH, and NRR. Residues 85 to 212 enclose the GST C-terminal domain; the sequence is DADGRQRVRA…AAPAAQPDSA (128 aa).

Belongs to the GST superfamily. Zeta family. As to quaternary structure, homodimer. The cofactor is glutathione.

It catalyses the reaction 3-maleylpyruvate = 3-fumarylpyruvate. Its pathway is aromatic compound metabolism; naphthalene degradation. Its function is as follows. Catalyzes the GSH-dependent isomerization of maleylpyruvate to fumarylpyruvate which is subsequently processed by NagK to form pyruvate and fumarate. In Ralstonia sp, this protein is Maleylpyruvate isomerase.